The following is a 274-amino-acid chain: Triosephosphate isomerase (274 aa).

13 to 15 (NWK) contributes to the substrate binding site. The active-site Electrophile is the His98. Glu170 serves as the catalytic Proton acceptor. 2 residues coordinate substrate: Gly176 and Ser216.

This sequence belongs to the triosephosphate isomerase family. Homodimer.

It is found in the cytoplasm. The catalysed reaction is D-glyceraldehyde 3-phosphate = dihydroxyacetone phosphate. The protein operates within carbohydrate biosynthesis; gluconeogenesis. It participates in carbohydrate degradation; glycolysis; D-glyceraldehyde 3-phosphate from glycerone phosphate: step 1/1. Functionally, involved in the gluconeogenesis. Catalyzes stereospecifically the conversion of dihydroxyacetone phosphate (DHAP) to D-glyceraldehyde-3-phosphate (G3P). This chain is Triosephosphate isomerase, found in Aster yellows witches'-broom phytoplasma (strain AYWB).